The sequence spans 765 residues: E3 ubiquitin-protein ligase SlrP (765 aa).

Positions 1 to 453 (MFNITNIQST…YQGPRVLFAM (453 aa)) are interaction with target proteins. 10 LRR repeats span residues 200–219 (QITT…ENLQ), 221–242 (NIKT…LPDT), 243–262 (IQEM…RLPS), 263–284 (ALQS…LPEE), 285–305 (LRYL…LPSE), 306–325 (ITHL…TLPP), 326–346 (GLKT…SLPP), 347–368 (ELQV…LPPT), 369–389 (ITTL…LPAA), and 390–410 (LQIM…LPHF). Residues 454–461 (GDFSIVRV) form a linker region. Residues 462–765 (TRPLHQAVQG…VSSLMSAYWR (304 aa)) are E3 ubiquitin-protein ligase catalytic domain. The 295-residue stretch at 464–758 (PLHQAVQGWL…NILLKKEVSS (295 aa)) folds into the NEL domain. Catalysis depends on Cys546, which acts as the Glycyl thioester intermediate.

This sequence belongs to the LRR-containing bacterial E3 ligase family. In terms of assembly, interacts with host TXN. Ubiquitinated in the presence of host E1 ubiquitin-activating enzyme, E2 ubiquitin-conjugating enzyme and ubiquitin.

It localises to the secreted. It is found in the host cytoplasm. It catalyses the reaction S-ubiquitinyl-[E2 ubiquitin-conjugating enzyme]-L-cysteine + [acceptor protein]-L-lysine = [E2 ubiquitin-conjugating enzyme]-L-cysteine + N(6)-ubiquitinyl-[acceptor protein]-L-lysine.. Functionally, effector proteins function to alter host cell physiology and promote bacterial survival in host tissues. This protein is an E3 ubiquitin ligase that interferes with host's ubiquitination pathway. Can ubiquitinate both ubiquitin and host TXN (thioredoxin). Leads to significant decrease of thioredoxin activity and increase of host cell death. This chain is E3 ubiquitin-protein ligase SlrP (slrP), found in Salmonella typhimurium (strain 14028s / SGSC 2262).